Reading from the N-terminus, the 508-residue chain is uncharacterized protein (508 aa).

The protein localises to the virion. This is an uncharacterized protein from Acanthamoeba polyphaga mimivirus (APMV).